We begin with the raw amino-acid sequence, 375 residues long: Kininogen (375 aa).

Residues 1 to 23 (MKLGVRLCVLVVFSLQLWGPGQG) form the signal peptide. Cystatin kininogen-type domains follow at residues 35-139 (CDDK…VEAP) and 156-260 (VESE…GPLD). Asn-74 carries N-linked (GlcNAc) asparagine glycosylation. Cystine bridges form between Cys-91–Cys-102, Cys-115–Cys-133, Cys-211–Cys-223, and Cys-234–Cys-254. N-linked (GlcNAc) asparagine glycosylation occurs at Asn-235. The disordered stretch occupies residues 283-375 (EVKTTQASTA…LSDLDLLGKK (93 aa)).

Post-translationally, N-glycosylated, with sialylated biantennary complex-type glycans. O-glycosylated, sialylated oligosaccharides. In terms of processing, bradykinin is released from kininogen by kallikrein. Post-translationally, the N-terminus is blocked. As to expression, expressed in the skin, liver, intestine, spleen, pancreas and kidney.

It is found in the cytoplasm. Its subcellular location is the vacuole. Functionally, inhibits papain and ficin (cysteine proteinases) but not trypsin (a serine proteinase). This chain is Kininogen (LOC106584303), found in Salmo salar (Atlantic salmon).